The following is a 773-amino-acid chain: DNA polymerase (773 aa).

2 cysteine pairs are disulfide-bonded: C428–C442 and C506–C509.

It belongs to the DNA polymerase type-B family.

The catalysed reaction is DNA(n) + a 2'-deoxyribonucleoside 5'-triphosphate = DNA(n+1) + diphosphate. In addition to polymerase activity, this DNA polymerase exhibits 3' to 5' exonuclease activity. The protein is DNA polymerase (pol) of Thermococcus gorgonarius.